The sequence spans 423 residues: Putative gustatory receptor 97a (423 aa).

The Cytoplasmic segment spans residues 1 to 31 (MRFLRRQTRRLRSIWQRSLPVRFRRGKLHTQ). A helical transmembrane segment spans residues 32–52 (LVTICLYATVFLNILYGVYLG). Residues 53 to 65 (RFSFRRKKFVFSK) are Extracellular-facing. Residues 66–86 (GLTIYSLFVATFFALFYIWNI) traverse the membrane as a helical segment. Residues 87–99 (YNEISTGQINLRD) are Cytoplasmic-facing. A helical membrane pass occupies residues 100 to 120 (TIGIYCYMNVCVCLFNYVTQW). The Extracellular portion of the chain corresponds to 121 to 152 (EKTLQIIRFQNSVPLFKVLDSLDISAMIVWRA). The helical transmembrane segment at 153–173 (FIYGLLKIVFCPLITYITLIL) threads the bilayer. Residues 174–200 (YHRRSISESQWTSVTTTKTMLPLIVSN) lie on the Cytoplasmic side of the membrane. A helical transmembrane segment spans residues 201–221 (QINNCFFGGLVLANLIFAAVN). At 222 to 278 (RKLHGIVKEANMLQSPVQMNLHKPYYRMRRFCELADLLDELARKYGFTASRSKNYLR) the chain is on the extracellular side. A helical membrane pass occupies residues 279-299 (FTDWSMVLSMLMNLLGITMGC). Residues 300–317 (YNQYLAIADHYINEEPFD) are Cytoplasmic-facing. The helical transmembrane segment at 318–338 (LFLAIVLVVFLAVPFLELVMV) threads the bilayer. The Extracellular segment spans residues 339 to 423 (ARISNQTLTR…SDLTLRFSLK (85 aa)). Asn-343 and Asn-393 each carry an N-linked (GlcNAc...) asparagine glycan.

It belongs to the insect chemoreceptor superfamily. Gustatory receptor (GR) family. Gr22e subfamily. In larvae, is expressed in neurons of the terminal external chemosensory organ.

It localises to the cell membrane. In terms of biological role, probable gustatory receptor which mediates acceptance or avoidance behavior, depending on its substrates. This Drosophila melanogaster (Fruit fly) protein is Putative gustatory receptor 97a (Gr97a).